Reading from the N-terminus, the 227-residue chain is Probable chorismate pyruvate-lyase (227 aa).

Substrate contacts are provided by arginine 75, leucine 113, and glutamate 173. Residues 192–227 form a disordered region; that stretch reads SGDWSAHPRVREHGRPLEHTASRAHPATRASDEQRR. The segment covering 200–212 has biased composition (basic and acidic residues); sequence RVREHGRPLEHTA.

Belongs to the UbiC family.

The protein resides in the cytoplasm. The catalysed reaction is chorismate = 4-hydroxybenzoate + pyruvate. It functions in the pathway cofactor biosynthesis; ubiquinone biosynthesis. Removes the pyruvyl group from chorismate, with concomitant aromatization of the ring, to provide 4-hydroxybenzoate (4HB) for the ubiquinone pathway. This Paraburkholderia xenovorans (strain LB400) protein is Probable chorismate pyruvate-lyase.